Reading from the N-terminus, the 579-residue chain is MRRPPGNGEAASEGPGGWGLWGVQESRRLCCAGHDRCKQALLQIGINMMALPGGRHLDSVTLPGQRLHLMQVDSVQRWMEDLKLMTECECMCVLQAKPISLEEDAQGDLILAGGPGPGDPLQLLLKRGWVISTELRRIGQKLAQDRWARVHSMSVRLTCHARSMVSEYSAVSRNSLKEMGEIEKLLMEKCSELSAVTERCLQVENEHVLKSMKACVSETLSMLGQHFGQLLELALTREVQALVRKIDASDNIYTTESTTGNLFSLTQEGAPLCRIIAKEGGVVALFKVCRQDSFRCLYPQALRTLASICCVEEGVHQLEKVDGVLCLADILTDNSHSEATRAEAAAVVAQVTSPHLPVTQHLSSFLESMEEIVTALVKLCQEASSGEVFLLASAALANITFFDTMACEMLLQLNAIRVLLEACSDKQRVDTPYTRDQIVTILANMSVLEQCASDIIQENGVQLIMGMLSEKPRSGTPAEVAACERVQQKAAVTLARLSRDPDVAREAVRLSCMSRLIELCRSPSERNSSDAVLVACLAALRRLAGVCPEGLQDSDFQQLVQPRLVDSFLLCSNMEESFV.

The tract at residues 74–89 is important for interaction with GPSM2; that stretch reads SVQRWMEDLKLMTECE. The PDZ-binding signature appears at 576 to 579; sequence ESFV.

In terms of assembly, interacts with ALS2CR19/PAR3B and F2RL2/PAR3. Interacts with GPSM1/AGS3 and GPSM2/LGN (via TPR repeat region). Identified in a complex with GPSM2 and F2RL2. Isoform 1 is expressed in various tissues with stronger expression in liver, kidney and small intestine. Isoform 2 is abundantly expressed in small intestine and to a lower extent in lung and pancreas.

The protein resides in the cytoplasm. It localises to the cell cortex. Its function is as follows. May function as an adapter linking the Par3 complex to the GPSM1/GPSM2 complex. Involved in spindle orientation during mitosis. May regulate cell proliferation and differentiation in the developing nervous system. May play a role in the asymmetric division of fibroblasts and participate in the process of stratification of the squamous epithelium. The polypeptide is Protein inscuteable homolog (INSC) (Homo sapiens (Human)).